Consider the following 35-residue polypeptide: Conotoxin Cal6.1d (35 aa).

The propeptide occupies G1 to R8. 3 disulfide bridges follow: C9–C25, C16–C29, and C24–C34.

This sequence belongs to the conotoxin O1 superfamily. In terms of tissue distribution, expressed by the venom duct.

It is found in the secreted. In terms of biological role, probable neurotoxin with unknown target. Possibly targets ion channels. This chain is Conotoxin Cal6.1d, found in Californiconus californicus (California cone).